Here is a 321-residue protein sequence, read N- to C-terminus: Olfactory receptor 3A2 (321 aa).

Residues 1–35 (MSLQKLMEPEAGTNRTAVAEFILLGLVQTEEMQPV) are Extracellular-facing. N-linked (GlcNAc...) asparagine glycosylation is present at N14. A helical transmembrane segment spans residues 36–58 (VFVLLLFAYLVTTGGNLSILAAV). Over 59-66 (LVEPKLHA) the chain is Cytoplasmic. The helical transmembrane segment at 67–88 (PMYFFLGNLSVLDVGCITVTVP) threads the bilayer. Residues 89 to 109 (AMLGRLLSHKSTISYDACLSQ) are Extracellular-facing. A disulfide bridge links C106 with C198. A helical membrane pass occupies residues 110-129 (LFFFHLLAGMDCFLLTAMAY). Topologically, residues 130–149 (DRLLAICQPLTYSTRMSQTV) are cytoplasmic. The helical transmembrane segment at 150-167 (QRMLVAASLACAFTNALT) threads the bilayer. Over 168–205 (HTVAMSTLNFCGPNEVNHFYCDLPQLFQLSCSSTQLNE) the chain is Extracellular. A helical transmembrane segment spans residues 206 to 229 (LLLFAVGFIMAGTPLVLIITAYSH). At 230-246 (VAAAVLRIRSVEGRKKA) the chain is on the cytoplasmic side. The chain crosses the membrane as a helical span at residues 247-270 (FSTCGSHLTVVCLFFGRGIFNYMR). Residues 271–281 (LGSEEASDKDK) lie on the Extracellular side of the membrane. A helical transmembrane segment spans residues 282-301 (GVGVFNTVINPMLNPLIYSL). Residues 302-321 (RNPDVQGALWQIFLGRRSLT) lie on the Cytoplasmic side of the membrane.

The protein belongs to the G-protein coupled receptor 1 family.

It localises to the cell membrane. In terms of biological role, odorant receptor. This chain is Olfactory receptor 3A2 (OR3A2), found in Homo sapiens (Human).